A 2223-amino-acid polypeptide reads, in one-letter code: Voltage-dependent T-type calcium channel subunit alpha-1I (2223 aa).

Residues 1-19 (MAESASPPSSSAAAPAAEP) show a composition bias toward low complexity. The tract at residues 1–46 (MAESASPPSSSAAAPAAEPGVTTEQPGPRSPPSSPPGLEEPLDGAD) is disordered. Residues 1–78 (MAESASPPSS…RNWCIKMVCN (78 aa)) are Cytoplasmic-facing. The I repeat unit spans residues 66 to 401 (TSPRNWCIKM…LCLVVIATQF (336 aa)). A helical transmembrane segment spans residues 79–99 (PWFECVSMLVILLNCVTLGMY). At 100–120 (QPCDDMDCLSDRCKILQVFDD) the chain is on the extracellular side. A helical transmembrane segment spans residues 121–141 (FIFIFFAMEMVLKMVALGIFG). Residues 142-148 (KKCYLGD) are Cytoplasmic-facing. A helical transmembrane segment spans residues 149–168 (TWNRLDFFIVMAGMVEYSLD). Residues 169–173 (LQNIN) are Extracellular-facing. The N-linked (GlcNAc...) asparagine glycan is linked to Asn-173. Residues 174–191 (LSAIRTVRVLRPLKAINR) traverse the membrane as a helical segment. At 192-211 (VPSMRILVNLLLDTLPMLGN) the chain is on the cytoplasmic side. Residues 212–232 (VLLLCFFVFFIFGIIGVQLWA) form a helical membrane-spanning segment. The Extracellular segment spans residues 233–377 (GLLRNRCFLE…DAHSFYNFIY (145 aa)). N-linked (GlcNAc...) asparagine glycans are attached at residues Asn-244 and Asn-311. A helical membrane pass occupies residues 378-398 (FILLIIVGSFFMINLCLVVIA). Residues 399 to 640 (TQFSETKQRE…AKLRGIVDSK (242 aa)) lie on the Cytoplasmic side of the membrane. Disordered stretches follow at residues 467-536 (LGPE…ATPH) and 555-616 (CCQH…EQAD). One copy of the II repeat lies at 626-865 (WRETRAKLRG…LLVAILVEGF (240 aa)). The chain crosses the membrane as a helical span at residues 641 to 661 (YFNRGIMMAILVNTVSMGIEH). At 662–676 (HEQPEELTNILEICN) the chain is on the extracellular side. A helical membrane pass occupies residues 677 to 697 (VVFTSMFALEMILKLAAFGLF). At 698 to 702 (DYLRN) the chain is on the cytoplasmic side. A helical membrane pass occupies residues 703–721 (PYNIFDSIIVIISIWEIVG). At 722–729 (QADGGLSV) the chain is on the extracellular side. A helical membrane pass occupies residues 730–753 (LRTFRLLRVLKLVRFMPALRRQLV). Residues 754–764 (VLMKTMDNVAT) are Cytoplasmic-facing. The helical transmembrane segment at 765 to 785 (FCMLLMLFIFIFSILGMHIFG) threads the bilayer. Residues 786-841 (CKFSLRTDTGDTVPDRKNFDSLLWAIVTVFQILTQEDWNVVLYNGMASTSPWASLY) lie on the Extracellular side of the membrane. The helical transmembrane segment at 842–862 (FVALMTFGNYVLFNLLVAILV) threads the bilayer. Topologically, residues 863–1166 (EGFQAEGDAN…NRFRVLCQTI (304 aa)) are cytoplasmic. The disordered stretch occupies residues 899–936 (GDPKLCPIPMTPNGHLDPSLPLGGHLGPAGAAGPAPRL). Residues 912-936 (GHLDPSLPLGGHLGPAGAAGPAPRL) show a composition bias toward low complexity. Phosphoserine is present on Ser-1058. The stretch at 1157–1434 (NRFRVLCQTI…MFVGVVVENF (278 aa)) is one III repeat. The helical transmembrane segment at 1167-1187 (IAHKLFDYVVLAFIFLNCITI) threads the bilayer. Over 1188-1209 (ALERPQIEAGSTERIFLTVSNY) the chain is Extracellular. Residues 1210 to 1230 (IFTAIFVGEMTLKVVSLGLYF) form a helical membrane-spanning segment. At 1231-1244 (GEQAYLRSSWNVLD) the chain is on the cytoplasmic side. Residues 1245–1265 (GFLVFVSIIDIVVSLASAGGA) traverse the membrane as a helical segment. Topologically, residues 1266–1272 (KILGVLR) are extracellular. The helical transmembrane segment at 1273–1294 (VLRLLRTLRPLRVISRAPGLKL) threads the bilayer. Residues 1295–1304 (VVETLISSLK) are Cytoplasmic-facing. The chain crosses the membrane as a helical span at residues 1305 to 1325 (PIGNIVLICCAFFIIFGILGV). Residues 1326–1410 (QLFKGKFYHC…TNHNPWMLLY (85 aa)) are Extracellular-facing. Asn-1342 and Asn-1345 each carry an N-linked (GlcNAc...) asparagine glycan. A helical transmembrane segment spans residues 1411–1431 (FISFLLIVSFFVLNMFVGVVV). Residues 1432 to 1485 (ENFHKCRQHQEAEEARRREEKRLRRLEKKRRKAQRLPYYATYCHTRLLIHSMCT) are Cytoplasmic-facing. The IV repeat unit spans residues 1472–1733 (TYCHTRLLIH…VVVAVLMKHL (262 aa)). Residues 1486–1506 (SHYLDIFITFIICLNVVTMSL) traverse the membrane as a helical segment. The Extracellular segment spans residues 1507–1522 (EHYNQPTSLETALKYC). Residues 1523-1543 (NYMFTTVFVLEAVLKLVAFGL) form a helical membrane-spanning segment. The Cytoplasmic portion of the chain corresponds to 1544–1556 (RRFFKDRWNQLDL). The chain crosses the membrane as a helical span at residues 1557–1577 (AIVLLSVMGITLEEIEINAAL). Over 1578 to 1583 (PINPTI) the chain is Extracellular. Residues 1584–1607 (IRIMRVLRIARVLKLLKMATGMRA) traverse the membrane as a helical segment. The Cytoplasmic portion of the chain corresponds to 1608–1621 (LLDTVVQALPQVGN). The chain crosses the membrane as a helical span at residues 1622 to 1642 (LGLLFMLLFFIYAALGVELFG). Over 1643-1709 (KLVCNDENPC…SSLQFVSPLY (67 aa)) the chain is Extracellular. A helical membrane pass occupies residues 1710–1730 (FVSFVLTAQFVLINVVVAVLM). At 1731–2223 (KHLDDSNKEA…PGDAASKRKR (493 aa)) the chain is on the cytoplasmic side. Disordered stretches follow at residues 1758–1784 (LGPG…GGGD), 1868–1897 (LGDD…PEPM), 1937–1960 (LKHD…LLPM), 2013–2062 (SDTS…LSPA), and 2076–2223 (SLRG…KRKR). Gly residues predominate over residues 1770–1784 (GAPGRGPGGAGGGGD). The span at 2013-2028 (SDTSLDASPSSSAGSL) shows a compositional bias: low complexity. Polar residues-rich tracts occupy residues 2029–2040 (QTTLEDSLTLSD) and 2087–2096 (HSSGGSTSPG). Residues 2098–2111 (THHDSMDPSDEEGR) show a composition bias toward basic and acidic residues. Residues 2126-2136 (TLSSLSLTSLF) show a composition bias toward low complexity. The span at 2137-2146 (CPPPPPPAPG) shows a compositional bias: pro residues. The segment covering 2160–2176 (AAPGRPHAAALAHGLAR) has biased composition (low complexity).

This sequence belongs to the calcium channel alpha-1 subunit (TC 1.A.1.11) family. CACNA1I subfamily. Interacts with CATSPER1 and CATSPER2, leading to suppress T-type calcium channel activity. In terms of processing, in response to raising of intracellular calcium, the T-type channels are activated by CaM-kinase II. In terms of tissue distribution, brain specific.

The protein resides in the membrane. It catalyses the reaction Ca(2+)(in) = Ca(2+)(out). Its function is as follows. Voltage-sensitive calcium channels (VSCC) mediate the entry of calcium ions into excitable cells and are also involved in a variety of calcium-dependent processes, including muscle contraction, hormone or neurotransmitter release, gene expression, cell motility, cell division and cell death. This channel gives rise to T-type calcium currents. T-type calcium channels belong to the 'low-voltage activated (LVA)' group and are strongly blocked by nickel and mibefradil. A particularity of this type of channels is an opening at quite negative potentials, and a voltage-dependent inactivation. T-type channels serve pacemaking functions in both central neurons and cardiac nodal cells and support calcium signaling in secretory cells and vascular smooth muscle. They may also be involved in the modulation of firing patterns of neurons which is important for information processing as well as in cell growth processes. Gates in voltage ranges similar to, but higher than alpha 1G or alpha 1H. Voltage-sensitive calcium channels (VSCC) mediate the entry of calcium ions into excitable cells and are also involved in a variety of calcium-dependent processes, including muscle contraction, hormone or neurotransmitter release, gene expression, cell motility, cell division and cell death. This channel gives rise to T-type calcium currents. This Homo sapiens (Human) protein is Voltage-dependent T-type calcium channel subunit alpha-1I (CACNA1I).